We begin with the raw amino-acid sequence, 509 residues long: 2,3-bisphosphoglycerate-independent phosphoglycerate mutase (509 aa).

Aspartate 11 serves as a coordination point for Mn(2+). Tyrosine 35 is modified (phosphotyrosine). Mn(2+) is bound at residue serine 61. Serine 61 serves as the catalytic Phosphoserine intermediate. Residues histidine 122, 152 to 153, arginine 184, arginine 190, 260 to 263, and lysine 335 contribute to the substrate site; these read RD and RPDR. Mn(2+) contacts are provided by aspartate 402, histidine 406, aspartate 443, histidine 444, and histidine 461.

This sequence belongs to the BPG-independent phosphoglycerate mutase family. As to quaternary structure, monomer. The cofactor is Mn(2+).

The enzyme catalyses (2R)-2-phosphoglycerate = (2R)-3-phosphoglycerate. It functions in the pathway carbohydrate degradation; glycolysis; pyruvate from D-glyceraldehyde 3-phosphate: step 3/5. Its function is as follows. Essential for rapid growth and for sporulation. Catalyzes the interconversion of 2-phosphoglycerate and 3-phosphoglycerate. This Bacillus cereus (strain ATCC 14579 / DSM 31 / CCUG 7414 / JCM 2152 / NBRC 15305 / NCIMB 9373 / NCTC 2599 / NRRL B-3711) protein is 2,3-bisphosphoglycerate-independent phosphoglycerate mutase.